The sequence spans 97 residues: Scorpine-like peptide Ev37 (97 aa).

The signal sequence occupies residues 1-19 (MNSKLTVIVLLALITIASC). Residues 55–95 (QNLCAFNVDTVGMCDADCKRQGKAKGVCHGTKCKCDVELSY) form the BetaSPN-type CS-alpha/beta domain. 3 cysteine pairs are disulfide-bonded: Cys58/Cys82, Cys68/Cys87, and Cys72/Cys89.

This sequence belongs to the long chain scorpion toxin family. Class 3 subfamily. Expressed by the venom gland.

The protein localises to the secreted. Functionally, selectively inhibits Kv1.3/KCNA3 channel (IC(50)=0.95 uM). Both N-terminal and C-terminal domains are likely involved in the interaction with Kv1.3/KCNA3, since neither its N-terminal domain (1-36) nor its C-terminal domain (37-78) block Kv1.3/KCNA3 channel. The protein is Scorpine-like peptide Ev37 of Euscorpiops validus (Scorpion).